Consider the following 542-residue polypeptide: Plasminogen-binding protein PgbB (542 aa).

Residues 399–542 (KSASKKSQKG…RRKALEMNKK (144 aa)) form a disordered region. Composition is skewed to basic and acidic residues over residues 418–435 (QERH…ENKV) and 447–456 (VKTRRPEPIR). The segment covering 457 to 467 (DQNNATQQGET) has biased composition (polar residues). A compositionally biased stretch (basic and acidic residues) spans 481 to 542 (NAAKKEVPKP…RRKALEMNKK (62 aa)).

The protein localises to the cell surface. In terms of biological role, binds plasminogen, specifically, and in a concentration and lysine-dependent manner. Plasminogen is the precursor of plasmin, a serine protease that cleaves fibrin, fibronectin, laminin and vitronectin. Acquisition of plasminogen/plasmin could enable H.pylori to degrade host components. This Helicobacter pylori (strain ATCC 700392 / 26695) (Campylobacter pylori) protein is Plasminogen-binding protein PgbB (pgbB).